A 131-amino-acid polypeptide reads, in one-letter code: Ribosome-binding factor A (131 aa).

This sequence belongs to the RbfA family. Monomer. Binds 30S ribosomal subunits, but not 50S ribosomal subunits or 70S ribosomes.

It is found in the cytoplasm. In terms of biological role, one of several proteins that assist in the late maturation steps of the functional core of the 30S ribosomal subunit. Associates with free 30S ribosomal subunits (but not with 30S subunits that are part of 70S ribosomes or polysomes). Required for efficient processing of 16S rRNA. May interact with the 5'-terminal helix region of 16S rRNA. The chain is Ribosome-binding factor A from Ruegeria pomeroyi (strain ATCC 700808 / DSM 15171 / DSS-3) (Silicibacter pomeroyi).